A 376-amino-acid chain; its full sequence is Cytoplasmic tRNA 2-thiolation protein 1 (376 aa).

The protein belongs to the TtcA family. CTU1/NCS6/ATPBD3 subfamily.

The protein resides in the cytoplasm. Its pathway is tRNA modification; 5-methoxycarbonylmethyl-2-thiouridine-tRNA biosynthesis. In terms of biological role, plays a central role in 2-thiolation of mcm(5)S(2)U at tRNA wobble positions of tRNA(Lys), tRNA(Glu) and tRNA(Gln). Directly binds tRNAs and probably acts by catalyzing adenylation of tRNAs, an intermediate required for 2-thiolation. It is unclear whether it acts as a sulfurtransferase that transfers sulfur from thiocarboxylated URM1 onto the uridine of tRNAs at wobble position. Prior mcm(5) tRNA modification by the elongator complex is required for 2-thiolation. May also be involved in protein urmylation. The polypeptide is Cytoplasmic tRNA 2-thiolation protein 1 (Scheffersomyces stipitis (strain ATCC 58785 / CBS 6054 / NBRC 10063 / NRRL Y-11545) (Yeast)).